The sequence spans 350 residues: Small ribosomal subunit biogenesis GTPase RsgA (350 aa).

The segment covering 1–17 (MSKNKLSKGQQRRVNAN) has biased composition (polar residues). The disordered stretch occupies residues 1–33 (MSKNKLSKGQQRRVNANHQRRLKTSKEKPDYDD). A CP-type G domain is found at 104–273 (TSVLTRPDFY…VIDSPGVREF (170 aa)). GTP-binding positions include 160 to 163 (NKID) and 214 to 222 (GQSGVGKSS). 4 residues coordinate Zn(2+): cysteine 297, cysteine 302, histidine 304, and cysteine 310.

Belongs to the TRAFAC class YlqF/YawG GTPase family. RsgA subfamily. Monomer. Associates with 30S ribosomal subunit, binds 16S rRNA. It depends on Zn(2+) as a cofactor.

It localises to the cytoplasm. Its function is as follows. One of several proteins that assist in the late maturation steps of the functional core of the 30S ribosomal subunit. Helps release RbfA from mature subunits. May play a role in the assembly of ribosomal proteins into the subunit. Circularly permuted GTPase that catalyzes slow GTP hydrolysis, GTPase activity is stimulated by the 30S ribosomal subunit. This Escherichia fergusonii (strain ATCC 35469 / DSM 13698 / CCUG 18766 / IAM 14443 / JCM 21226 / LMG 7866 / NBRC 102419 / NCTC 12128 / CDC 0568-73) protein is Small ribosomal subunit biogenesis GTPase RsgA.